A 155-amino-acid polypeptide reads, in one-letter code: Protein SprT-like (155 aa).

In terms of domain architecture, SprT-like spans 7–145 (QRHMEEVSLQ…GSCGGKLIQT (139 aa)). H67 serves as a coordination point for Zn(2+). E68 is an active-site residue. A Zn(2+)-binding site is contributed by H71.

This sequence belongs to the SprT family. Zn(2+) serves as cofactor.

It localises to the cytoplasm. The sequence is that of Protein SprT-like from Listeria monocytogenes serotype 4b (strain CLIP80459).